A 473-amino-acid chain; its full sequence is Cysteine--tRNA ligase (473 aa).

Cys28 serves as a coordination point for Zn(2+). Positions 30–40 (MTVYDFCHIGH) match the 'HIGH' region motif. Positions 212, 237, and 241 each coordinate Zn(2+). Residues 277 to 281 (KMSKS) carry the 'KMSKS' region motif. Lys280 lines the ATP pocket.

Belongs to the class-I aminoacyl-tRNA synthetase family. As to quaternary structure, monomer. Requires Zn(2+) as cofactor.

The protein resides in the cytoplasm. It catalyses the reaction tRNA(Cys) + L-cysteine + ATP = L-cysteinyl-tRNA(Cys) + AMP + diphosphate. The protein is Cysteine--tRNA ligase of Polynucleobacter necessarius subsp. necessarius (strain STIR1).